A 420-amino-acid polypeptide reads, in one-letter code: Serine hydroxymethyltransferase (420 aa).

(6S)-5,6,7,8-tetrahydrofolate is bound by residues Leu123 and 127–129; that span reads GHL. Position 232 is an N6-(pyridoxal phosphate)lysine (Lys232). 357 to 359 lines the (6S)-5,6,7,8-tetrahydrofolate pocket; that stretch reads SPF.

This sequence belongs to the SHMT family. As to quaternary structure, homodimer. It depends on pyridoxal 5'-phosphate as a cofactor.

It localises to the cytoplasm. It carries out the reaction (6R)-5,10-methylene-5,6,7,8-tetrahydrofolate + glycine + H2O = (6S)-5,6,7,8-tetrahydrofolate + L-serine. It functions in the pathway one-carbon metabolism; tetrahydrofolate interconversion. The protein operates within amino-acid biosynthesis; glycine biosynthesis; glycine from L-serine: step 1/1. Catalyzes the reversible interconversion of serine and glycine with tetrahydrofolate (THF) serving as the one-carbon carrier. This reaction serves as the major source of one-carbon groups required for the biosynthesis of purines, thymidylate, methionine, and other important biomolecules. Also exhibits THF-independent aldolase activity toward beta-hydroxyamino acids, producing glycine and aldehydes, via a retro-aldol mechanism. The chain is Serine hydroxymethyltransferase from Streptococcus pyogenes serotype M4 (strain MGAS10750).